The sequence spans 154 residues: uncharacterized protein (154 aa).

The protein belongs to the MG032/MG096/MG288 family.

This is an uncharacterized protein from Mycoplasma pneumoniae (strain ATCC 29342 / M129 / Subtype 1) (Mycoplasmoides pneumoniae).